We begin with the raw amino-acid sequence, 200 residues long: MRLSGRGLRCVRGGREVFDGLDFEAAGGEALALIGRNGAGKTSLLRLIAGLLMPAAGSIDFDGSEPDTPVAEQAHYLGHRDALKPSLSVVENLAFWRDFLGGEPTDLMAGITAVGLSHAAELPAAYLSAGQRRRLSIARLLVVRRPIWLLDEPTSALDVRGQAMFARLMSDHLASGGLIVAATHSPLGITTREMRIGAAA.

In terms of domain architecture, ABC transporter spans 1–200 (MRLSGRGLRC…TREMRIGAAA (200 aa)). 35-42 (GRNGAGKT) contributes to the ATP binding site.

It belongs to the ABC transporter superfamily. CcmA exporter (TC 3.A.1.107) family. The complex is composed of two ATP-binding proteins (CcmA) and two transmembrane proteins (CcmB).

The protein resides in the cell inner membrane. It catalyses the reaction heme b(in) + ATP + H2O = heme b(out) + ADP + phosphate + H(+). In terms of biological role, part of the ABC transporter complex CcmAB involved in the biogenesis of c-type cytochromes; once thought to export heme, this seems not to be the case, but its exact role is uncertain. Responsible for energy coupling to the transport system. The sequence is that of Cytochrome c biogenesis ATP-binding export protein CcmA from Rhodopseudomonas palustris (strain HaA2).